Consider the following 238-residue polypeptide: Probable metal transport system ATP-binding protein TP_0035 (238 aa).

The 222-residue stretch at 10–231 (VLLQNVSFRY…LDMQKKDALA (222 aa)) folds into the ABC transporter domain. 44 to 51 (GENGSGKS) is an ATP binding site.

Belongs to the ABC transporter superfamily.

The protein localises to the cell inner membrane. Functionally, part of an ATP-driven transport system TP_0034/TP_0035/TP_0036 for a metal. Probably responsible for energy coupling to the transport system. This chain is Probable metal transport system ATP-binding protein TP_0035, found in Treponema pallidum (strain Nichols).